A 130-amino-acid chain; its full sequence is UPF0251 protein MmarC6_0272 (130 aa).

This sequence belongs to the UPF0251 family.

This is UPF0251 protein MmarC6_0272 from Methanococcus maripaludis (strain C6 / ATCC BAA-1332).